Consider the following 224-residue polypeptide: UPF0502 protein Psyr_2419 (224 aa).

This sequence belongs to the UPF0502 family.

This chain is UPF0502 protein Psyr_2419, found in Pseudomonas syringae pv. syringae (strain B728a).